Reading from the N-terminus, the 380-residue chain is NADPH quinone oxidoreductase (380 aa).

Residues 1–17 (MSSFLSKRFISTTQRAM) constitute a mitochondrion transit peptide.

The protein belongs to the zinc-containing alcohol dehydrogenase family. Quinone oxidoreductase subfamily. Homodimer.

It is found in the mitochondrion. It carries out the reaction a quinone + NADH + H(+) = a quinol + NAD(+). The enzyme catalyses a quinone + NADPH + H(+) = a quinol + NADP(+). In terms of biological role, NADPH quinone oxidoreductase that efficiently reduces 1,4-benzoquinone, whereas no activities are found for menadiones and methoxyquinones. The protein is NADPH quinone oxidoreductase of Kluyveromyces marxianus (Yeast).